Reading from the N-terminus, the 133-residue chain is ATP synthase epsilon chain, chloroplastic (133 aa).

It belongs to the ATPase epsilon chain family. F-type ATPases have 2 components, CF(1) - the catalytic core - and CF(0) - the membrane proton channel. CF(1) has five subunits: alpha(3), beta(3), gamma(1), delta(1), epsilon(1). CF(0) has three main subunits: a, b and c.

Its subcellular location is the plastid. It localises to the chloroplast thylakoid membrane. Produces ATP from ADP in the presence of a proton gradient across the membrane. This Nephroselmis olivacea (Green alga) protein is ATP synthase epsilon chain, chloroplastic.